We begin with the raw amino-acid sequence, 1400 residues long: MNQEIMNLFNPTTPAQVFDQIRISIASPEKILSWSYGEIKKPETINYRTFKPERDGLFCARIFGPIKDYECLCGKYKRMKYKGIICEKCSVEVTLSRVRRERMGHIELAAPVAHIWFLKSLPSRIGQLLDMTLKDLERILYFEYYVVLEPGLTDLKERQLLSEEEYLRAQDQYGQDSFTAMIGAEAIRELLKGLELEKIDAQLRAEMAETDSDIKHKKLAKRLKIVEAFRYSGNKPEWMILTVVPVIPPDLRPLVPLDGGRFATSDLNDLYRRVINRNNRLKRLMELRAPDIIIRNEKRMLQEAVDALFDNGRRGRVITGANKRPLKSLADMLKGKQGRFRQNLLGKRVDYSGRSVIVVGPELKLHQCGLPKKMALELFKPFIYSRLDAKGLSTTVKQAKKLVEKERPEVWDILDEVIREHPVLLNRAPTLHRLGIQAFEPVLIEGKAIQLHPLVCSAFNADFDGDQMAVHVPLSLEAQLEARVLMMSTNNILHPANGQPIIVPSQDIVLGLYYLSIMREGLPGEGKVFADLAELEHALYSKVIHLHTKIKYRWHWVNEEGENTVRLLETTAGRILLGQVLPKSPKLPFDVINKLMTKREISGVIDQVYRHCGQKETVIFCDRIMALGFFNAFKAGISFGKDDMVVPGSKWKIVDSTRTLAKDFEQQYNDGLITHGEKYNKVVDAWSKATEEIAKEMMKEISAVRKAPDGSEQQVNSIYMMAHSGARGSPAQMRQLAGMRGLMAKPSGEIIETPIISNFKEGLSVLEYFNSTHGARKGLADTALKTANSGYLTRRLVDVAQDCIITQADCGTSLGIKMRAIVDAGTVVASLGSRILGRTAGEDVRDPATNEIIVKRGDLMEERDVEAIHQAGVQEVKIRSALTCELVNGICGKCYGRDLARGTPVNHGEAVGVIAAQSIGEPGTQLTMRTFHIGGAAQINEQSVIESNFDGKIVIKNRAIARNGEGHNVAMVRNMVIAIVDPDGTERATHRIQYGARVHVDEGDMVKRGQRIAEWDPYTRPILTEVEGTIDFEDLIEDQSISETLDESTGIAKRIVIDWRSTRGGADLRPAIVIKGKDGKVLKLARGGDARYMLSVDAILSVDVGAQVKPGDILARISTESAKTRDITGGLPRVAELFEARRPKDAAIIAEIAGTIRFGRDYKNKRRLSIEPLDKNEEAREYLIPKGKHIHLQDGDVVEKGDFIVEGNPAPHDILAIKGIEELAAYLVNEIQEVYRLQGVLINDKHIEVIVRQMLQKIEITDQGDTDMISGEQVDKIEFNALNAKAVEEGKKPATGNPVLLGITKASLQTRSFFSAASFQETTRVLTEAAVNGKVDPLEGLKENVIVGRLIPAGTGASMAKIREVAVKRDRLILDEREKQAAIVPAAAPEAEPLSLPPAE.

Residues Cys-71, Cys-73, Cys-86, and Cys-89 each coordinate Zn(2+). The Mg(2+) site is built by Asp-462, Asp-464, and Asp-466. Residues Cys-810, Cys-884, Cys-891, and Cys-894 each coordinate Zn(2+).

This sequence belongs to the RNA polymerase beta' chain family. In terms of assembly, the RNAP catalytic core consists of 2 alpha, 1 beta, 1 beta' and 1 omega subunit. When a sigma factor is associated with the core the holoenzyme is formed, which can initiate transcription. Mg(2+) serves as cofactor. The cofactor is Zn(2+).

It catalyses the reaction RNA(n) + a ribonucleoside 5'-triphosphate = RNA(n+1) + diphosphate. In terms of biological role, DNA-dependent RNA polymerase catalyzes the transcription of DNA into RNA using the four ribonucleoside triphosphates as substrates. This is DNA-directed RNA polymerase subunit beta' from Rhodopseudomonas palustris (strain TIE-1).